A 184-amino-acid chain; its full sequence is Dirigent protein 13 (184 aa).

Positions 1–25 are cleaved as a signal peptide; that stretch reads MANQIYIISLIFLSVLLYQSTTVLS. A disulfide bridge links cysteine 36 with cysteine 182. N-linked (GlcNAc...) asparagine glycans are attached at residues asparagine 55 and asparagine 119.

This sequence belongs to the plant dirigent protein family. In terms of assembly, homodimer. In terms of tissue distribution, expressed in root vasculature and meristems, cotyledons, flowers, siliques, and leaf trichomes. Localized in the interfascicular/vascular cambia and developing xylem.

Its subcellular location is the secreted. It localises to the extracellular space. The protein localises to the apoplast. Its function is as follows. Dirigent proteins impart stereoselectivity on the phenoxy radical-coupling reaction, yielding optically active lignans from two molecules of coniferyl alcohol in the biosynthesis of lignans, flavonolignans, and alkaloids and thus plays a central role in plant secondary metabolism. The chain is Dirigent protein 13 (DIR13) from Arabidopsis thaliana (Mouse-ear cress).